Here is a 129-residue protein sequence, read N- to C-terminus: Lysozyme C (129 aa).

A C-type lysozyme domain is found at 1 to 129 (KVYGRCELAA…VHAWIRGCRL (129 aa)). Cystine bridges form between Cys6/Cys127, Cys30/Cys115, Cys64/Cys80, and Cys76/Cys94. Active-site residues include Glu35 and Asp52.

The protein belongs to the glycosyl hydrolase 22 family. As to quaternary structure, monomer.

Its subcellular location is the secreted. It catalyses the reaction Hydrolysis of (1-&gt;4)-beta-linkages between N-acetylmuramic acid and N-acetyl-D-glucosamine residues in a peptidoglycan and between N-acetyl-D-glucosamine residues in chitodextrins.. Functionally, lysozymes have primarily a bacteriolytic function; those in tissues and body fluids are associated with the monocyte-macrophage system and enhance the activity of immunoagents. The sequence is that of Lysozyme C (LYZ) from Pavo cristatus (Indian peafowl).